The primary structure comprises 61 residues: Weak toxin CM-1c (61 aa).

Disulfide bonds link Cys3–Cys21, Cys14–Cys37, Cys41–Cys53, and Cys54–Cys59.

It belongs to the three-finger toxin family. Short-chain subfamily. Orphan group VI sub-subfamily. In terms of tissue distribution, expressed by the venom gland.

The protein resides in the secreted. This is Weak toxin CM-1c from Hemachatus haemachatus (Rinkhals).